Consider the following 59-residue polypeptide: Large ribosomal subunit protein bL32 (59 aa).

Basic residues predominate over residues 1–19 (MAQPKKKTSKSRRNMRRSH). A disordered region spans residues 1 to 20 (MAQPKKKTSKSRRNMRRSHD).

Belongs to the bacterial ribosomal protein bL32 family.

This is Large ribosomal subunit protein bL32 from Maridesulfovibrio salexigens (strain ATCC 14822 / DSM 2638 / NCIMB 8403 / VKM B-1763) (Desulfovibrio salexigens).